The chain runs to 592 residues: Arginine--tRNA ligase (592 aa).

The 'HIGH' region motif lies at 134–144 (ANPTGPLHVGH).

This sequence belongs to the class-I aminoacyl-tRNA synthetase family. Monomer.

The protein localises to the cytoplasm. The catalysed reaction is tRNA(Arg) + L-arginine + ATP = L-arginyl-tRNA(Arg) + AMP + diphosphate. The polypeptide is Arginine--tRNA ligase (Coxiella burnetii (strain CbuK_Q154) (Coxiella burnetii (strain Q154))).